Consider the following 204-residue polypeptide: uncharacterized protein (204 aa).

Its subcellular location is the mitochondrion. This is an uncharacterized protein from Arabidopsis thaliana (Mouse-ear cress).